The following is a 45-amino-acid chain: Conotoxin reg3.12 (45 aa).

A propeptide spanning residues 1 to 31 (DQPVERHAGNKRHLNPTIRRAMIIDANRREK) is cleaved from the precursor. 3 disulfide bridges follow: C32–C44, C33–C42, and C38–C45.

The protein belongs to the conotoxin M superfamily. In terms of tissue distribution, expressed by the venom duct.

The protein localises to the secreted. The protein is Conotoxin reg3.12 of Conus regius (Crown cone).